Consider the following 2078-residue polypeptide: Autophagy-related protein 2 homolog B (2078 aa).

A Chorein N-terminal domain is found at 13-108 (ACRYLLQRYL…EMVFRPRPRP (96 aa)). A phosphoserine mark is found at S255 and S379. The interval 473–495 (GSTFPSNLVHPTPLQKTSLPSRS) is disordered. The span at 486 to 495 (LQKTSLPSRS) shows a compositional bias: polar residues. Phosphoserine is present on residues S497, S840, S886, S899, and S1008. The tract at residues 868 to 888 (EEEENDGHYQEEEEGGAHSLK) is disordered. A compositionally biased stretch (basic and acidic residues) spans 873–888 (DGHYQEEEEGGAHSLK). A Phosphotyrosine modification is found at Y1012. Phosphoserine is present on residues S1016 and S1018. The residue at position 1022 (T1022) is a Phosphothreonine. Positions 1375 to 1405 (ADMKPGAFQRRSKVDSSGRSSSRGPVLPEAD) are disordered. A Phosphoserine modification is found at S1526.

It belongs to the ATG2 family. In terms of assembly, interacts with WDR45/WIPI4.

The protein resides in the preautophagosomal structure membrane. Its subcellular location is the lipid droplet. The protein localises to the endoplasmic reticulum membrane. It carries out the reaction a 1,2-diacyl-sn-glycero-3-phospho-L-serine(in) = a 1,2-diacyl-sn-glycero-3-phospho-L-serine(out). The catalysed reaction is a 1,2-diacyl-sn-glycero-3-phosphoethanolamine(in) = a 1,2-diacyl-sn-glycero-3-phosphoethanolamine(out). Functionally, lipid transfer protein required for both autophagosome formation and regulation of lipid droplet morphology and dispersion. Tethers the edge of the isolation membrane (IM) to the endoplasmic reticulum (ER) and mediates direct lipid transfer from ER to IM for IM expansion. Binds to the ER exit site (ERES), which is the membrane source for autophagosome formation, and extracts phospholipids from the membrane source and transfers them to ATG9 (ATG9A or ATG9B) to the IM for membrane expansion. Lipid transfer activity is enhanced by WDR45/WIPI4, which promotes ATG2B-association with phosphatidylinositol 3-monophosphate (PI3P)-containing membranes. The polypeptide is Autophagy-related protein 2 homolog B (Homo sapiens (Human)).